A 413-amino-acid polypeptide reads, in one-letter code: Serine hydroxymethyltransferase (413 aa).

Residues leucine 119 and 123–125 (GHL) each bind (6S)-5,6,7,8-tetrahydrofolate. Lysine 228 carries the post-translational modification N6-(pyridoxal phosphate)lysine. (6S)-5,6,7,8-tetrahydrofolate is bound at residue 351-353 (SPF).

The protein belongs to the SHMT family. As to quaternary structure, homodimer. Pyridoxal 5'-phosphate serves as cofactor.

Its subcellular location is the cytoplasm. It catalyses the reaction (6R)-5,10-methylene-5,6,7,8-tetrahydrofolate + glycine + H2O = (6S)-5,6,7,8-tetrahydrofolate + L-serine. It functions in the pathway one-carbon metabolism; tetrahydrofolate interconversion. It participates in amino-acid biosynthesis; glycine biosynthesis; glycine from L-serine: step 1/1. Its function is as follows. Catalyzes the reversible interconversion of serine and glycine with tetrahydrofolate (THF) serving as the one-carbon carrier. This reaction serves as the major source of one-carbon groups required for the biosynthesis of purines, thymidylate, methionine, and other important biomolecules. Also exhibits THF-independent aldolase activity toward beta-hydroxyamino acids, producing glycine and aldehydes, via a retro-aldol mechanism. This Clostridium botulinum (strain ATCC 19397 / Type A) protein is Serine hydroxymethyltransferase.